The following is a 573-amino-acid chain: MAEQEYDLIVVGSGAGACWAPIRAQEQGLKTLVVEKTELFGGTSALSGGGIWIPLNYDQKTAGIKDDLETAFGYMKRCVRGMATDDRVLAYVETASKMAEYLRQIGIPYRAMAKYADYYPHIEGSRPGGRTMDPVDFNAARLRVTALETMRPGPPGNQLFGRMSISAFEAHSMLSRELKSRFTILGIMLKYFLDYPWRNKTRRDRRMTGGQALVAGLLTAANKARVEMWCNSPLKELVQDASGRVTGVIVERNGQRQQINARRGVLLGAGGFERNQEMRDQYLNKPTRLVDGNPCGRQYGDAHRAGQAWAHTGADGLVLGRAHHGCSQGAGLSRHFRGTLAAGVHGGQRQGAALPQRVRPVSGIPAAMLAENAKGNGGVPAWIVFDASFRAQNPMGPLMPGSAVPDSKVRKSWLNNVYWKGRRWKIWRADRRGRAGLQVSARRMTEYARAGKDLDFDRGGNVFDRYYGDPRLKNPNLGPIEKGPFYAMRLWPGEIGTKGGLLTDREGRVLDTQGRIIEGLYCVGNNSASVMAPAYAGAGSTLGPAMTFAFRAVADMVGKPLPLENPHLLGKTV.

An FAD-binding site is contributed by 7 to 36; sequence DLIVVGSGAGACWAPIRAQEQGLKTLVVEK.

This sequence belongs to the FAD-dependent oxidoreductase 2 family. 3-oxosteroid dehydrogenase subfamily. FAD serves as cofactor.

The protein localises to the cell inner membrane. The catalysed reaction is a 3-oxosteroid + A = a 3-oxo-Delta(1)-steroid + AH2. It participates in lipid metabolism; steroid degradation. Functionally, dehydrogenates steroids by introducing a double bond in steroid ring A. This is 3-oxosteroid 1-dehydrogenase from Comamonas testosteroni (Pseudomonas testosteroni).